We begin with the raw amino-acid sequence, 226 residues long: Adenylate kinase (226 aa).

ATP is bound at residue 12–17 (GSGKGT). The tract at residues 32 to 61 (ESGAIFREHIGGGTELGLKAKEYIERGDLV) is NMP. Residues Ser33, Arg38, 59–61 (DLV), 87–90 (GFPR), and Gln94 contribute to the AMP site. The segment at 128–171 (GRRLCVNDNNHPNHIAFEAIKPVEKDGKLVCRVCGGDLKTRPDD) is LID. Position 129 (Arg129) interacts with ATP. AMP contacts are provided by Arg168 and Arg180. Ala213 provides a ligand contact to ATP.

This sequence belongs to the adenylate kinase family. As to quaternary structure, monomer.

It localises to the cytoplasm. It catalyses the reaction AMP + ATP = 2 ADP. It participates in purine metabolism; AMP biosynthesis via salvage pathway; AMP from ADP: step 1/1. Catalyzes the reversible transfer of the terminal phosphate group between ATP and AMP. Plays an important role in cellular energy homeostasis and in adenine nucleotide metabolism. The sequence is that of Adenylate kinase from Desulfotalea psychrophila (strain LSv54 / DSM 12343).